Here is a 258-residue protein sequence, read N- to C-terminus: Acyl-[acyl-carrier-protein]--UDP-N-acetylglucosamine O-acyltransferase (258 aa).

This sequence belongs to the transferase hexapeptide repeat family. LpxA subfamily. Homotrimer.

The protein resides in the cytoplasm. It carries out the reaction a (3R)-hydroxyacyl-[ACP] + UDP-N-acetyl-alpha-D-glucosamine = a UDP-3-O-[(3R)-3-hydroxyacyl]-N-acetyl-alpha-D-glucosamine + holo-[ACP]. The protein operates within glycolipid biosynthesis; lipid IV(A) biosynthesis; lipid IV(A) from (3R)-3-hydroxytetradecanoyl-[acyl-carrier-protein] and UDP-N-acetyl-alpha-D-glucosamine: step 1/6. In terms of biological role, involved in the biosynthesis of lipid A, a phosphorylated glycolipid that anchors the lipopolysaccharide to the outer membrane of the cell. The protein is Acyl-[acyl-carrier-protein]--UDP-N-acetylglucosamine O-acyltransferase of Pseudomonas fluorescens (strain Pf0-1).